We begin with the raw amino-acid sequence, 420 residues long: D-tagatose-1,6-bisphosphate aldolase subunit GatZ (420 aa).

This sequence belongs to the GatZ/KbaZ family. GatZ subfamily. As to quaternary structure, forms a complex with GatY.

It functions in the pathway carbohydrate metabolism; D-tagatose 6-phosphate degradation; D-glyceraldehyde 3-phosphate and glycerone phosphate from D-tagatose 6-phosphate: step 2/2. Functionally, component of the tagatose-1,6-bisphosphate aldolase GatYZ that is required for full activity and stability of the Y subunit. Could have a chaperone-like function for the proper and stable folding of GatY. When expressed alone, GatZ does not show any aldolase activity. Is involved in the catabolism of galactitol. The polypeptide is D-tagatose-1,6-bisphosphate aldolase subunit GatZ (Escherichia coli O45:K1 (strain S88 / ExPEC)).